Consider the following 160-residue polypeptide: Cytochrome b6-f complex subunit 4 (160 aa).

3 consecutive transmembrane segments (helical) span residues Leu36–Ile56, Leu95–Glu115, and Thr131–Ile151.

Belongs to the cytochrome b family. PetD subfamily. The 4 large subunits of the cytochrome b6-f complex are cytochrome b6, subunit IV (17 kDa polypeptide, petD), cytochrome f and the Rieske protein, while the 4 small subunits are petG, petL, petM and petN. The complex functions as a dimer.

It is found in the plastid. The protein localises to the chloroplast thylakoid membrane. Component of the cytochrome b6-f complex, which mediates electron transfer between photosystem II (PSII) and photosystem I (PSI), cyclic electron flow around PSI, and state transitions. In Pyropia yezoensis (Susabi-nori), this protein is Cytochrome b6-f complex subunit 4.